A 101-amino-acid polypeptide reads, in one-letter code: ATP synthase subunit f, mitochondrial (101 aa).

A mitochondrion-targeting transit peptide spans 1–6; it reads MIFKRA.

This sequence belongs to the ATPase F chain family. In terms of assembly, F-type ATPases have 2 components, CF(1) - the catalytic core - and CF(0) - the membrane proton channel. In yeast, the dimeric form of ATP synthase consists of 17 polypeptides: alpha, beta, gamma, delta, epsilon, 4 (B), 5 (OSCP), 6 (A), 8, 9 (C), d, E (Tim11), f, g, h, i/j and k.

It localises to the mitochondrion. It is found in the mitochondrion inner membrane. Functionally, mitochondrial membrane ATP synthase (F(1)F(0) ATP synthase or Complex V) produces ATP from ADP in the presence of a proton gradient across the membrane which is generated by electron transport complexes of the respiratory chain. F-type ATPases consist of two structural domains, F(1) - containing the extramembraneous catalytic core and F(0) - containing the membrane proton channel, linked together by a central stalk and a peripheral stalk. During catalysis, ATP synthesis in the catalytic domain of F(1) is coupled via a rotary mechanism of the central stalk subunits to proton translocation. Part of the complex F(0) domain. Minor subunit located with subunit a in the membrane. The polypeptide is ATP synthase subunit f, mitochondrial (ATP17) (Saccharomyces cerevisiae (strain ATCC 204508 / S288c) (Baker's yeast)).